Here is a 549-residue protein sequence, read N- to C-terminus: Cytochrome bc1 complex cytochrome b subunit (549 aa).

Residues 45-65 (FLLGEIALYSFVVLLITGVYL) traverse the membrane as a helical segment. 2 residues coordinate heme: histidine 114 and histidine 128. Helical transmembrane passes span 118 to 138 (ALMFAAAIMVHLARIFFTGAF), 146 to 166 (WVIGSLLLILAMFEGYFGYSL), and 189 to 209 (VIGTWLHWALFGGDFPGTILI). Heme-binding residues include histidine 216 and histidine 231. Helical transmembrane passes span 217–237 (ILLLPGIILALIGLHLALVWF), 266–286 (SGAFFAAIVGVLGLMGGLLQI), 335–355 (PVWVAVIMGLVFVLLPAYPFL), 381–401 (IGAMAIAFYMVLTLAAMNDII), and 418–438 (IGMVILPPFVYFITYRWCIGL).

The protein belongs to the cytochrome b family. In terms of assembly, the cytochrome bc1 complex is composed of a cytochrome b (QcrB), the Rieske iron-sulfur protein (QcrA) and a diheme cytochrome c (QcrC) subunit. Heme serves as cofactor.

Its subcellular location is the cell membrane. The enzyme catalyses a quinol + 2 Fe(III)-[cytochrome c](out) = a quinone + 2 Fe(II)-[cytochrome c](out) + 2 H(+)(out). Its function is as follows. Cytochrome b subunit of the cytochrome bc1 complex, an essential component of the respiratory electron transport chain required for ATP synthesis. The bc1 complex catalyzes the oxidation of ubiquinol and the reduction of cytochrome c in the respiratory chain. The bc1 complex operates through a Q-cycle mechanism that couples electron transfer to generation of the proton gradient that drives ATP synthesis. The cytochrome b subunit contains two ubiquinol reactive sites: the oxidation (QP) site and the reduction (QN) site. The sequence is that of Cytochrome bc1 complex cytochrome b subunit (qcrB) from Mycobacterium bovis (strain ATCC BAA-935 / AF2122/97).